The chain runs to 119 residues: Beta-2-microglobulin (119 aa).

Positions 1-20 are cleaved as a signal peptide; the sequence is MARFVVVALLVLLSVSDLEA. An Ig-like C1-type domain is found at 25–114; sequence PKIQVYSRYP…VTFLTPKTVK (90 aa). Cysteines 45 and 100 form a disulfide.

It belongs to the beta-2-microglobulin family. As to quaternary structure, heterodimer of an alpha chain and a beta chain. Beta-2-microglobulin is the beta-chain of major histocompatibility complex class I molecules.

It is found in the secreted. Its function is as follows. Component of the class I major histocompatibility complex (MHC). Involved in the presentation of peptide antigens to the immune system. The protein is Beta-2-microglobulin (B2M) of Leontocebus fuscicollis (Brown-mantled tamarin).